The sequence spans 211 residues: FMN-dependent NADH:quinone oxidoreductase 2 (211 aa).

Position 17-19 (17-19 (SYS)) interacts with FMN.

This sequence belongs to the azoreductase type 1 family. Homodimer. The cofactor is FMN.

It catalyses the reaction 2 a quinone + NADH + H(+) = 2 a 1,4-benzosemiquinone + NAD(+). The enzyme catalyses N,N-dimethyl-1,4-phenylenediamine + anthranilate + 2 NAD(+) = 2-(4-dimethylaminophenyl)diazenylbenzoate + 2 NADH + 2 H(+). Its activity is regulated as follows. Strongly inhibited by Pb(2+) and weakly inhibited by Cu(2+), Hg(2+) and Fe(2+). Stable in presence of Ag(+). Functionally, quinone reductase that provides resistance to thiol-specific stress caused by electrophilic quinones. Contributes to resistance to 2-methylhydroquinone (2-MHQ) and catechol. Exhibits NADH-dependent 2,6-dichloroindophenol (DCIP) oxidoreductase activity. In terms of biological role, also exhibits azoreductase activity. Catalyzes the reductive cleavage of the azo bond in aromatic azo compounds to the corresponding amines. Can reduce methyl red. This is FMN-dependent NADH:quinone oxidoreductase 2 from Bacillus subtilis (strain 168).